We begin with the raw amino-acid sequence, 409 residues long: NDP-glycosyltransferase ltbB (409 aa).

Asn36 is a glycosylation site (N-linked (GlcNAc...) asparagine). The helical transmembrane segment at Ile319–Ala339 threads the bilayer.

It belongs to the GT2 glycosyltransferase family.

It is found in the membrane. The protein operates within secondary metabolite biosynthesis. Functionally, NDP-glycosyltransferase; part of the gene cluster that mediates the biosynthesis of luteodienoside A, a glycosylated polyketide consisting of an unusual 1-O-beta-D-glucopyranosyl-myo-inositol (glucinol) ester of 3-hydroxy-2,2,4-trimethylocta-4,6-dienoic acid. LtbB likely serves as a glucinol synthase by transferring D-glucose to myo-inositol using NDP-glucose as a substrate. The ltbA carnitine O-acyltransferase (cAT) domain uses glucinol produced by the glycosyltransferase ltbB as an offloading substrate to release luteodienoside A from the HR-PKS. Since ltbA and ltbB are sufficient for the biosynthesis of luteodienoside A, the functions of the methyltransferase ltbC and the FAD-binding monooxygenase ltbD within the pathway remain obscur. This Aspergillus luteorubrus protein is NDP-glycosyltransferase ltbB.